The primary structure comprises 198 residues: Holliday junction branch migration complex subunit RuvA (198 aa).

Residues 1–63 form a domain I region; it reads MYDYIKGQLT…EDAHLLFGFH (63 aa). The interval 64 to 142 is domain II; the sequence is TEDEKDVFLK…EAPQETGNTK (79 aa). Residues 143-147 form a flexible linker region; the sequence is ARSNK. A domain III region spans residues 148–198; the sequence is AGNTQLDEAIEALLALGYKATELKKIRAFFEGTSETAEQYIKSALKLLMKG.

It belongs to the RuvA family. Homotetramer. Forms an RuvA(8)-RuvB(12)-Holliday junction (HJ) complex. HJ DNA is sandwiched between 2 RuvA tetramers; dsDNA enters through RuvA and exits via RuvB. An RuvB hexamer assembles on each DNA strand where it exits the tetramer. Each RuvB hexamer is contacted by two RuvA subunits (via domain III) on 2 adjacent RuvB subunits; this complex drives branch migration. In the full resolvosome a probable DNA-RuvA(4)-RuvB(12)-RuvC(2) complex forms which resolves the HJ.

It localises to the cytoplasm. In terms of biological role, the RuvA-RuvB-RuvC complex processes Holliday junction (HJ) DNA during genetic recombination and DNA repair, while the RuvA-RuvB complex plays an important role in the rescue of blocked DNA replication forks via replication fork reversal (RFR). RuvA specifically binds to HJ cruciform DNA, conferring on it an open structure. The RuvB hexamer acts as an ATP-dependent pump, pulling dsDNA into and through the RuvAB complex. HJ branch migration allows RuvC to scan DNA until it finds its consensus sequence, where it cleaves and resolves the cruciform DNA. This chain is Holliday junction branch migration complex subunit RuvA, found in Streptococcus pyogenes serotype M12 (strain MGAS2096).